A 395-amino-acid polypeptide reads, in one-letter code: Ribosomal RNA small subunit methyltransferase H (395 aa).

Residues Gly101–His103, Asp120, Tyr147, Asp171, and Gln178 contribute to the S-adenosyl-L-methionine site.

Belongs to the methyltransferase superfamily. RsmH family.

The protein resides in the cytoplasm. It catalyses the reaction cytidine(1402) in 16S rRNA + S-adenosyl-L-methionine = N(4)-methylcytidine(1402) in 16S rRNA + S-adenosyl-L-homocysteine + H(+). In terms of biological role, specifically methylates the N4 position of cytidine in position 1402 (C1402) of 16S rRNA. In Mycobacterium ulcerans (strain Agy99), this protein is Ribosomal RNA small subunit methyltransferase H.